We begin with the raw amino-acid sequence, 530 residues long: Asc-type amino acid transporter 1 (530 aa).

Positions 1–36 (MRRDSDMASHIQQPGGHGNPGPAPSPSPGPGPGPGA) are disordered. Pro residues predominate over residues 21–33 (GPAPSPSPGPGPG). Transmembrane regions (helical) follow at residues 46-66 (IGLVSACTIIIGNIIGSGIFI), 78-98 (VGLALFVWVLGGGVTALGSLC), 119-139 (IFGGLAGFLLLWSAVLIMYPT), 192-212 (IQVIFTGGKLLALSLIITVGF), 274-294 (AIFISIPLVTFVYTFTNVAYF), 316-336 (LLGYFSWVMPVSVALSTFGGI), 368-388 (CTPIPALLVCCGATAVIMLVG), 394-414 (INYVSFINYLCYGVTILGLLV), 430-450 (LLVPVVYLVFWAFLLVFSFIS), and 454-474 (VCGVGIIIILTGVPIFFLGVF). Residues 508–530 (EEENGPMGQPSPLPITDKPLKTQ) form a disordered region.

The protein belongs to the amino acid-polyamine-organocation (APC) superfamily. In terms of assembly, disulfide-linked heterodimer with the amino acid transport protein SLC3A2/4F2hc.

It localises to the cell membrane. The catalysed reaction is L-alanine(in) + glycine(out) = L-alanine(out) + glycine(in). It carries out the reaction L-serine(out) + L-alanine(in) = L-serine(in) + L-alanine(out). The enzyme catalyses L-threonine(out) + L-alanine(in) = L-threonine(in) + L-alanine(out). It catalyses the reaction L-cysteine(out) + L-alanine(in) = L-cysteine(in) + L-alanine(out). The catalysed reaction is 2-aminoisobutanoate(out) + L-alanine(in) = 2-aminoisobutanoate(in) + L-alanine(out). It carries out the reaction D-serine(out) + L-alanine(in) = D-serine(in) + L-alanine(out). The enzyme catalyses D-alanine(out) + L-alanine(in) = D-alanine(in) + L-alanine(out). It catalyses the reaction L-valine(out) + L-alanine(in) = L-valine(in) + L-alanine(out). The catalysed reaction is L-methionine(out) + L-alanine(in) = L-methionine(in) + L-alanine(out). It carries out the reaction beta-alanine(out) + L-alanine(in) = beta-alanine(in) + L-alanine(out). The enzyme catalyses D-cysteine(out) + L-alanine(in) = D-cysteine(in) + L-alanine(out). It catalyses the reaction D-threonine(out) + L-alanine(in) = D-threonine(in) + L-alanine(out). The catalysed reaction is D-isoleucine(out) + D-serine(in) = D-isoleucine(in) + D-serine(out). It carries out the reaction D-serine(in) = D-serine(out). Functionally, associates with SLC3A2/4F2hc to form a functional heterodimeric complex that translocates small neutral L- and D-amino acids across the plasma membrane. Preferentially mediates exchange transport, but can also operate via facilitated diffusion. Acts as a major transporter for glycine, L- and D-serine in the central nervous system. At the spinal cord and brainstem regulates glycine metabolism and glycinergic inhibitory neurotransmission by providing for glycine de novo synthesis from L-serine and glycine recycling from astrocytes to glycinergic motor neurons. At Schaffer collateral-CA1 synapses mediates D-serine and glycine release that modulates post-synaptic activation of NMDA receptors and excitatory glutamatergic transmission. May regulate D-serine release from mesenchymal progenitors located in developing subcutaneous adipose tissue, favoring white adipocyte over thermogenic beige adipocyte lineage commitment. This Rattus norvegicus (Rat) protein is Asc-type amino acid transporter 1 (Slc7a10).